A 334-amino-acid polypeptide reads, in one-letter code: Trans-1,2-dihydrobenzene-1,2-diol dehydrogenase (334 aa).

The protein belongs to the Gfo/Idh/MocA family. Homodimer. Small intestine.

It carries out the reaction (1R,2R)-1,2-dihydrobenzene-1,2-diol + NADP(+) = catechol + NADPH + H(+). The catalysed reaction is D-xylose + NADP(+) = D-xylono-1,5-lactone + NADPH + H(+). The protein is Trans-1,2-dihydrobenzene-1,2-diol dehydrogenase (DHDH) of Homo sapiens (Human).